The chain runs to 94 residues: Small ribosomal subunit protein uS19 (94 aa).

This sequence belongs to the universal ribosomal protein uS19 family.

Functionally, protein S19 forms a complex with S13 that binds strongly to the 16S ribosomal RNA. This chain is Small ribosomal subunit protein uS19, found in Clostridium botulinum (strain Langeland / NCTC 10281 / Type F).